Reading from the N-terminus, the 362-residue chain is Chorismate synthase (362 aa).

Arginine 46 is a binding site for NADP(+). FMN-binding positions include 122 to 124 (RSS), 238 to 239 (NA), glycine 278, 293 to 297 (KPTPS), and arginine 319.

This sequence belongs to the chorismate synthase family. Homotetramer. FMNH2 is required as a cofactor.

The enzyme catalyses 5-O-(1-carboxyvinyl)-3-phosphoshikimate = chorismate + phosphate. The protein operates within metabolic intermediate biosynthesis; chorismate biosynthesis; chorismate from D-erythrose 4-phosphate and phosphoenolpyruvate: step 7/7. Functionally, catalyzes the anti-1,4-elimination of the C-3 phosphate and the C-6 proR hydrogen from 5-enolpyruvylshikimate-3-phosphate (EPSP) to yield chorismate, which is the branch point compound that serves as the starting substrate for the three terminal pathways of aromatic amino acid biosynthesis. This reaction introduces a second double bond into the aromatic ring system. In Campylobacter jejuni subsp. jejuni serotype O:2 (strain ATCC 700819 / NCTC 11168), this protein is Chorismate synthase.